Here is a 255-residue protein sequence, read N- to C-terminus: Protein DOG1-like 2 (255 aa).

The DOG1 domain maps to 10 to 246; it reads EKLQKRCYHE…HDRGRVRADV (237 aa).

In Arabidopsis thaliana (Mouse-ear cress), this protein is Protein DOG1-like 2.